We begin with the raw amino-acid sequence, 753 residues long: 5-methyltetrahydropteroyltriglutamate--homocysteine methyltransferase (753 aa).

Residues 17-20 (RELK) and Lys-117 each bind 5-methyltetrahydropteroyltri-L-glutamate. L-homocysteine contacts are provided by residues 431 to 433 (IGS) and Glu-484. L-methionine contacts are provided by residues 431–433 (IGS) and Glu-484. Residues 515–516 (RC) and Trp-561 each bind 5-methyltetrahydropteroyltri-L-glutamate. Asp-599 is an L-homocysteine binding site. Asp-599 provides a ligand contact to L-methionine. Glu-605 contributes to the 5-methyltetrahydropteroyltri-L-glutamate binding site. The Zn(2+) site is built by His-641, Cys-643, and Glu-665. His-694 acts as the Proton donor in catalysis. Cys-726 is a binding site for Zn(2+).

This sequence belongs to the vitamin-B12 independent methionine synthase family. The cofactor is Zn(2+).

It carries out the reaction 5-methyltetrahydropteroyltri-L-glutamate + L-homocysteine = tetrahydropteroyltri-L-glutamate + L-methionine. It functions in the pathway amino-acid biosynthesis; L-methionine biosynthesis via de novo pathway; L-methionine from L-homocysteine (MetE route): step 1/1. In terms of biological role, catalyzes the transfer of a methyl group from 5-methyltetrahydrofolate to homocysteine resulting in methionine formation. In Klebsiella pneumoniae (strain 342), this protein is 5-methyltetrahydropteroyltriglutamate--homocysteine methyltransferase.